Reading from the N-terminus, the 126-residue chain is Topoisomerase I damage affected protein 2 (126 aa).

S2 bears the N-acetylserine mark.

This sequence belongs to the TDA2 family.

It is found in the cytoplasm. It localises to the cell projection. The polypeptide is Topoisomerase I damage affected protein 2 (TDA2) (Saccharomyces cerevisiae (strain JAY291) (Baker's yeast)).